Reading from the N-terminus, the 365-residue chain is tRNA(Met) cytidine acetate ligase (365 aa).

ATP-binding positions include 7-20 (IAEF…HKYL), Gly96, Asn152, and Arg175.

Belongs to the TmcAL family.

Its subcellular location is the cytoplasm. The catalysed reaction is cytidine(34) in elongator tRNA(Met) + acetate + ATP = N(4)-acetylcytidine(34) in elongator tRNA(Met) + AMP + diphosphate. In terms of biological role, catalyzes the formation of N(4)-acetylcytidine (ac(4)C) at the wobble position of elongator tRNA(Met), using acetate and ATP as substrates. First activates an acetate ion to form acetyladenylate (Ac-AMP) and then transfers the acetyl group to tRNA to form ac(4)C34. The protein is tRNA(Met) cytidine acetate ligase of Streptococcus pneumoniae (strain JJA).